The chain runs to 261 residues: Potassium/proton antiporter CemA (261 aa).

Helical transmembrane passes span 47–67 and 138–158; these read FLVF…GPWV and IISH…YFIM.

This sequence belongs to the CemA family.

It is found in the plastid. The protein resides in the chloroplast inner membrane. The enzyme catalyses K(+)(in) + H(+)(out) = K(+)(out) + H(+)(in). Functionally, contributes to K(+)/H(+) antiport activity by supporting proton efflux to control proton extrusion and homeostasis in chloroplasts in a light-dependent manner to modulate photosynthesis. Prevents excessive induction of non-photochemical quenching (NPQ) under continuous-light conditions. Indirectly promotes efficient inorganic carbon uptake into chloroplasts. This is Potassium/proton antiporter CemA from Ginkgo biloba (Ginkgo).